Consider the following 224-residue polypeptide: tRNA (guanine-N(7)-)-methyltransferase (224 aa).

4 residues coordinate S-adenosyl-L-methionine: E54, E79, E106, and D129. The active site involves D129. Substrate is bound by residues K133 and D165.

This sequence belongs to the class I-like SAM-binding methyltransferase superfamily. TrmB family.

The catalysed reaction is guanosine(46) in tRNA + S-adenosyl-L-methionine = N(7)-methylguanosine(46) in tRNA + S-adenosyl-L-homocysteine. Its pathway is tRNA modification; N(7)-methylguanine-tRNA biosynthesis. In terms of biological role, catalyzes the formation of N(7)-methylguanine at position 46 (m7G46) in tRNA. The sequence is that of tRNA (guanine-N(7)-)-methyltransferase from Chlamydia muridarum (strain MoPn / Nigg).